A 396-amino-acid polypeptide reads, in one-letter code: Tryptophan synthase beta chain (396 aa).

An N6-(pyridoxal phosphate)lysine modification is found at K88.

The protein belongs to the TrpB family. Tetramer of two alpha and two beta chains. The cofactor is pyridoxal 5'-phosphate.

It catalyses the reaction (1S,2R)-1-C-(indol-3-yl)glycerol 3-phosphate + L-serine = D-glyceraldehyde 3-phosphate + L-tryptophan + H2O. Its pathway is amino-acid biosynthesis; L-tryptophan biosynthesis; L-tryptophan from chorismate: step 5/5. Functionally, the beta subunit is responsible for the synthesis of L-tryptophan from indole and L-serine. This Actinobacillus pleuropneumoniae serotype 5b (strain L20) protein is Tryptophan synthase beta chain.